The chain runs to 250 residues: Ubiquitin-conjugating enzyme E2 6 (250 aa).

Residues 1–232 (MATKQAHKRL…DGKEPNDSSS (232 aa)) lie on the Cytoplasmic side of the membrane. Residues 5-167 (QAHKRLTKEY…VQENVETLEK (163 aa)) form the UBC core domain. Cys87 acts as the Glycyl thioester intermediate in catalysis. The residue at position 139 (Ser139) is a Phosphoserine. Thr178 is modified (phosphothreonine). The interval 209-229 (AEQALRQSENNSKKDGKEPND) is disordered. The segment covering 219-228 (NSKKDGKEPN) has biased composition (basic and acidic residues). Residues 233-249 (MVYIGIAIFLFLVGLFM) traverse the membrane as a helical segment.

Belongs to the ubiquitin-conjugating enzyme family.

It is found in the endoplasmic reticulum membrane. The enzyme catalyses S-ubiquitinyl-[E1 ubiquitin-activating enzyme]-L-cysteine + [E2 ubiquitin-conjugating enzyme]-L-cysteine = [E1 ubiquitin-activating enzyme]-L-cysteine + S-ubiquitinyl-[E2 ubiquitin-conjugating enzyme]-L-cysteine.. Its pathway is protein modification; protein ubiquitination. In terms of biological role, catalyzes the covalent attachment of ubiquitin to other proteins. Functions in degradation of misfolded or regulated proteins localized in the endoplasmic reticulum (ER) lumen or membrane via the ubiquitin-proteasome system. Cognate E2 conjugating enzyme for the DOA10 ubiquitin ligase complex, which is part of the ERAD-C pathway responsible for the rapid degradation of membrane proteins with misfolded cytoplasmic domains. The polypeptide is Ubiquitin-conjugating enzyme E2 6 (UBC6) (Saccharomyces cerevisiae (strain ATCC 204508 / S288c) (Baker's yeast)).